The primary structure comprises 92 residues: Neuropeptide ShK-like2 (92 aa).

Residues 1-23 form the signal peptide; that stretch reads MTTIRCVLFAVLLFAYCALLIKA. Residues 24–51 constitute a propeptide that is removed on maturation; the sequence is RSIDAEAEKTWQEEETKTVAEKSPLKKR. 3 disulfide bridges follow: Cys-53-Cys-92, Cys-61-Cys-85, and Cys-70-Cys-89.

Transcripts are first expressed mostly in the endoderm (with rare ectodermal cells) in the late planulae. They are mostly expressed in endodermal ganglion cells in the body column and tentacles in primary polyps, as well as in a small number of ectodermal sensory neurons in tentacles and body wall. They are not expressed in nematocytes. In terms of tissue distribution, transcripts are predominantly expressed in ectodermal sensory neurons in early and late planulae. They are expressed in endodermal ganglion cells in the body column and tentacles in primary polyps, as well as in a small number of ectodermal neurons in pharynx. They are not expressed in nematocytes.

In terms of biological role, in vivo, this neuropeptide induces contraction paralysis followed by death (within 2 hours) on 4 zebrafish larvae on the 15 tested. Also induces body contraction in Nematostella 11-dpf polyps. This is Neuropeptide ShK-like2 from Nematostella vectensis (Starlet sea anemone).